The chain runs to 151 residues: Group 10 secretory phospholipase A2 (151 aa).

Positions 1–17 (MLLLLLLLLLGPGPGFS) are cleaved as a signal peptide. The propeptide occupies 18 to 28 (EATRRSHVYKR). 8 disulfides stabilise this stretch: C39–C97, C53–C143, C55–C71, C70–C125, C76–C150, C77–C118, C86–C111, and C104–C116. Residues Y54, G56, and G58 each coordinate Ca(2+). Residue H74 is part of the active site. D75 serves as a coordination point for Ca(2+). The active site involves D119.

Belongs to the phospholipase A2 family. Interacts with PLA2R1; this interaction mediates PLA2G10 clearance and inactivation. Requires Ca(2+) as cofactor. In terms of tissue distribution, expressed at high levels in testis and the gastrointestinal tract including stomach and colon. Expressed at lower levels in other tissues including small intestine, uterus, oviduct, lung, thymus, spleen and brain. Expressed in Paneth-like secretory epithelial cells of the colon. Expressed in gastric and ileac epithelial cells and in glandular epithelium of intestinal mucosa (at protein level). Expressed in late spermatogenic cells, spermatocytes and spermatids, but not spermatogonia in seminiferous tubules (at protein level). Expressed mainly in the apical side of endometrial epithelial cells and in the interstitium beneath the epithelium of uterus (at protein level). Expressed in resident spleen macrophages (at protein level). Expressed at outermost layer of hair follicles. Expressed in dorsal root ganglia in both NEFH-positive A-fibers and PRPH-positive C-fibers (at protein level).

The protein resides in the secreted. It localises to the lysosome. It is found in the cytoplasmic vesicle. Its subcellular location is the secretory vesicle. The protein localises to the acrosome. The catalysed reaction is a 1,2-diacyl-sn-glycero-3-phosphocholine + H2O = a 1-acyl-sn-glycero-3-phosphocholine + a fatty acid + H(+). It catalyses the reaction 1-hexadecanoyl-2-(9Z-octadecenoyl)-sn-glycero-3-phosphocholine + H2O = 1-hexadecanoyl-sn-glycero-3-phosphocholine + (9Z)-octadecenoate + H(+). It carries out the reaction 1-octadecanoyl-2-(5Z,8Z,11Z,14Z-eicosatetraenoyl)-sn-glycero-3-phosphocholine + H2O = 1-octadecanoyl-sn-glycero-3-phosphocholine + (5Z,8Z,11Z,14Z)-eicosatetraenoate + H(+). The enzyme catalyses 1,2-dihexadecanoyl-sn-glycero-3-phosphocholine + H2O = 1-hexadecanoyl-sn-glycero-3-phosphocholine + hexadecanoate + H(+). The catalysed reaction is 1-hexadecanoyl-2-(9Z-octadecenoyl)-sn-glycero-3-phosphoglycerol + H2O = 1-hexadecanoyl-sn-glycero-3-phosphoglycerol + (9Z)-octadecenoate + H(+). It catalyses the reaction 1,2-dihexadecanoyl-sn-glycero-3-phospho-(1'-sn-glycerol) + H2O = 1-hexadecanoyl-sn-glycero-3-phospho-(1'-sn-glycerol) + hexadecanoate + H(+). It carries out the reaction 1-hexadecanoyl-2-(9Z-octadecenoyl)-sn-glycero-3-phospho-L-serine + H2O = 1-hexadecanoyl-sn-glycero-3-phospho-L-serine + (9Z)-octadecenoate + H(+). The enzyme catalyses 1-hexadecanoyl-2-(9Z,12Z-octadecadienoyl)-sn-glycero-3-phosphoethanolamine + H2O = 1-hexadecanoyl-sn-glycero-3-phosphoethanolamine + (9Z,12Z)-octadecadienoate + H(+). The catalysed reaction is 1-hexadecanoyl-2-(9Z-octadecenoyl)-sn-glycero-3-phosphate + H2O = 1-hexadecanoyl-sn-glycero-3-phosphate + (9Z)-octadecenoate + H(+). It catalyses the reaction 1-O-hexadecyl-2-acetyl-sn-glycero-3-phosphocholine + H2O = 1-O-hexadecyl-sn-glycero-3-phosphocholine + acetate + H(+). Functionally, secretory calcium-dependent phospholipase A2 that primarily targets extracellular phospholipids. Hydrolyzes the ester bond of the fatty acyl group attached at sn-2 position of phospholipids with preference for phosphatidylcholines and phosphatidylglycerols over phosphatidylethanolamines. Preferentially releases sn-2 omega-6 and omega-3 polyunsaturated fatty acyl (PUFA) chains over saturated fatty acyls. Contributes to phospholipid remodeling of very low-density lipoprotein (VLDL), low-density lipoprotein (LDL) and high-density lipoprotein (HDL) particles. Hydrolyzes LDL phospholipids releasing unsaturated fatty acids that regulate macrophage differentiation toward foam cells. Efficiently hydrolyzes and inactivates PAF, a potent lipid mediator present in oxidized LDL. May act in an autocrine and paracrine manner. Secreted by lung epithelium, targets membrane phospholipids of infiltrating eosinophils, releasing arachidonate and boosting eicosanoid and cysteinyl leukotriene synthesis involved in airway inflammatory response. Secreted by gut epithelium, hydrolyzes dietary and biliary phosphatidylcholines in the gastrointestinal lumen, thereby regulating adipogenesis and body weight. Plays a stem cell regulator role in colon epithelium. Within intracellular compartment, mediates Paneth-like cell differentiation and its stem cell supporting functions by inhibiting Wnt signaling pathway in intestinal stem cell (ISC). Secreted in the intestinal lumen upon inflammation, acts in an autocrine way and promotes prostaglandin E2 synthesis that stimulates the Wnt signaling pathway in ISCs and tissue regeneration. May participate in hair follicle morphogenesis by regulating phosphatidylethanolamines metabolism at the outermost epithelial layer and facilitating melanin synthesis. By generating lysophosphatidylcholines (LPCs) at sperm acrosome controls sperm cell capacitation, acrosome reaction and overall fertility. May promote neurite outgrowth in neuron fibers involved in nociception. Contributes to lipid remodeling of cellular membranes and generation of lipid mediators involved in pathogen clearance. Cleaves sn-2 fatty acyl chains of phosphatidylglycerols and phosphatidylethanolamines, which are major components of membrane phospholipids in bacteria. Displays bactericidal activity against Gram-positive bacteria by directly hydrolyzing phospholipids of the bacterial membrane. In pulmonary epithelium, may contribute to host defense response against adenoviral infection. Prevents adenovirus entry into host cells by hydrolyzing host cell plasma membrane, releasing C16:0 LPCs that inhibit virus-mediated membrane fusion and viral infection. Likely prevents adenoviral entry into the endosomes of host cells. May play a role in maturation and activation of innate immune cells including macrophages, group 2 innate lymphoid cells and mast cells. The sequence is that of Group 10 secretory phospholipase A2 (Pla2g10) from Mus musculus (Mouse).